A 195-amino-acid polypeptide reads, in one-letter code: HTH-type transcriptional regulator BetI (195 aa).

One can recognise an HTH tetR-type domain in the interval 8-68; sequence EIRRAQLIDA…ATMRHVLRDL (61 aa). The segment at residues 31–50 is a DNA-binding region (H-T-H motif); the sequence is TLASVAQRANISTGIVSHYF.

The protein operates within amine and polyamine biosynthesis; betaine biosynthesis via choline pathway [regulation]. Its function is as follows. Repressor involved in the biosynthesis of the osmoprotectant glycine betaine. It represses transcription of the choline transporter BetT and the genes of BetAB involved in the synthesis of glycine betaine. This is HTH-type transcriptional regulator BetI from Burkholderia mallei (strain NCTC 10247).